A 702-amino-acid chain; its full sequence is Protein sepa-1 (702 aa).

The segment at 39-160 (RQRFCYEKTD…KESTSYGQFR (122 aa)) is required for self-association and interaction with pgl-3. 3 short sequence motifs (LIR) span residues 107-110 (FVEV), 247-250 (FQKI), and 298-301 (FGFV). The interval 450-471 (AKDPEEPTTAASEGGNTYGYQE) is disordered. Residues 458-468 (TAASEGGNTYG) show a composition bias toward polar residues. The short motif at 469–472 (YQEL) is the LIR 4 element. Residues 508–543 (AAMDKKKKRRELKSRLNKINAQIDELEKRRMERAGK) adopt a coiled-coil conformation. Residues 545 to 564 (QVVSSSVPSEEAAQVEAPAS) are disordered. One can recognise a KIX domain in the interval 597–674 (NTSKEWIVED…TVDQILKKTL (78 aa)). A compositionally biased stretch (basic and acidic residues) spans 675–685 (KKDQRATEHNH). Residues 675–702 (KKDQRATEHNHQQPTQSSDELAKNHEKN) are disordered.

Self-associates. Interacts (via the LIR motifs) with lgg-1; the interaction is direct. Interacts (via the LIR motifs) with lgg-2; the interaction is direct. Interacts with pgl-3; interaction is enhanced in the presence of RNA. Interacts with epg-2; may be modulated by prmt-1. In terms of processing, degraded by autophagy.

Its subcellular location is the nucleus. The protein localises to the cytoplasm. It is found in the cytoplasmic granule. Adapter protein that connects P-granules in somatic cells with the autophagic machinery. Association with other adapters such as epg-2 and P-granule components such as pgl-3 is required for the accumulation and degradation of P-granules by autophagy in somatic cells. This ensures exclusive localization of the P-granules in germ cells. This chain is Protein sepa-1, found in Caenorhabditis elegans.